Consider the following 315-residue polypeptide: MVTWMLPAGLVASAVVAASSANLGPGFDSIGLALSLCDEIVVETTDSGLVVVVDGEGADQVPMGPEHLVVRAVRRGLQAVGVSAAGLVVRCRNAIPHSRGLGSSAAAVVGGLAVVNGFVAQIDSTPLSNAQLIQLASEFEGHPDNAAAAVLGGAVVSWVDRSYDQPDYCAVPLRLHPDIHLFAAIPEERSSTAESRVLLPARVSHDDARFNVSRAALLVVALTERPDLLMAATEDVLHQPHRASAMSASAEYLRLLRRHNVAATLSGAGPSLIALSTQSELPREAAEYGAANGFIIIKMTAGDEVCWRPEVTVPG.

An ATP-binding site is contributed by 96–106 (PHSRGLGSSAA).

It belongs to the GHMP kinase family. Homoserine kinase subfamily.

It is found in the cytoplasm. It catalyses the reaction L-homoserine + ATP = O-phospho-L-homoserine + ADP + H(+). It functions in the pathway amino-acid biosynthesis; L-threonine biosynthesis; L-threonine from L-aspartate: step 4/5. Catalyzes the ATP-dependent phosphorylation of L-homoserine to L-homoserine phosphate. The polypeptide is Homoserine kinase (Mycobacterium leprae (strain Br4923)).